Reading from the N-terminus, the 61-residue chain is Small ribosomal subunit protein uS14 (61 aa).

Positions 24, 27, 40, and 43 each coordinate Zn(2+).

This sequence belongs to the universal ribosomal protein uS14 family. Zinc-binding uS14 subfamily. In terms of assembly, part of the 30S ribosomal subunit. Contacts proteins S3 and S10. Zn(2+) is required as a cofactor.

Binds 16S rRNA, required for the assembly of 30S particles and may also be responsible for determining the conformation of the 16S rRNA at the A site. The chain is Small ribosomal subunit protein uS14 from Dictyoglomus thermophilum (strain ATCC 35947 / DSM 3960 / H-6-12).